The primary structure comprises 467 residues: MAP kinase-interacting serine/threonine-protein kinase 2 (467 aa).

A Protein kinase domain is found at 83–367; the sequence is QLQQEILGEG…AAQVLQHPWV (285 aa). ATP is bound by residues 89–97 and K112; that span reads LGEGAYAKV. The active-site Proton acceptor is the D204. Zn(2+) contacts are provided by C298, C310, and C313. The tract at residues 432–467 is disordered; it reads MQLSPPSESKLAKRRQQGSKGGISPPSLAPLLIVSD.

It belongs to the protein kinase superfamily. CAMK Ser/Thr protein kinase family. Mg(2+) is required as a cofactor. Requires Zn(2+) as cofactor.

The catalysed reaction is L-seryl-[protein] + ATP = O-phospho-L-seryl-[protein] + ADP + H(+). It carries out the reaction L-threonyl-[protein] + ATP = O-phospho-L-threonyl-[protein] + ADP + H(+). Functionally, may play a role in the response to environmental stress and cytokines. Appears to regulate translation by phosphorylating EIF4E, thus increasing the affinity of this protein for the 7-methylguanosine-containing mRNA cap. The chain is MAP kinase-interacting serine/threonine-protein kinase 2 (mknk2) from Xenopus laevis (African clawed frog).